Consider the following 641-residue polypeptide: E3 ubiquitin-protein ligase TRIM47 (641 aa).

The RING-type zinc finger occupies 9 to 58 (CPICLEPLREPVTLPCGHNFCLACLGALWPHRSAGGTGGSGGPARCPLCQ). Thr72 carries the post-translational modification Phosphothreonine. A disordered region spans residues 81–123 (QGSVPGPMSAPASGSTRGATPEPSAPSAPPPAPEPSAPCAPEQ). Over residues 103–118 (PSAPSAPPPAPEPSAP) the composition is skewed to pro residues. The B box-type zinc-finger motif lies at 181-221 (LEESLCPRHLRPLERYCRVERVCLCEACATQDHRGHELVPL). Residues Cys186, His189, Cys208, and His213 each contribute to the Zn(2+) site. Residues 305–325 (QGDLRRQEEQRSRLSKARHNL) are a coiled coil. Residue Ser393 is modified to Phosphoserine. Residues 396–416 (DGLQKLGSEDVESQDPDSTSL) form a disordered region. The B30.2/SPRY domain occupies 413–634 (STSLLESEAP…LQIGPLKKSC (222 aa)). Ser464 is subject to Phosphoserine. An Omega-N-methylarginine modification is found at Arg585. Residue Ser591 is modified to Phosphoserine.

Belongs to the TRIM/RBCC family. As to expression, expressed in hepatocytes, expression is increased in fatty livers.

The protein localises to the cytoplasm. It is found in the nucleus. The catalysed reaction is S-ubiquitinyl-[E2 ubiquitin-conjugating enzyme]-L-cysteine + [acceptor protein]-L-lysine = [E2 ubiquitin-conjugating enzyme]-L-cysteine + N(6)-ubiquitinyl-[acceptor protein]-L-lysine.. The protein operates within protein modification; protein ubiquitination. E3 ubiquitin-protein ligase that mediates the ubiquitination and proteasomal degradation of CYLD. This is E3 ubiquitin-protein ligase TRIM47 from Mus musculus (Mouse).